The chain runs to 192 residues: Signal peptidase complex catalytic subunit sec11 (192 aa).

Residues 1-18 (MLSFLSSNLSNTRQSIAQ) are Cytoplasmic-facing. Residues 19 to 39 (VLNFALVLSTAFMLWKGLSVV) form a helical; Signal-anchor for type II membrane protein membrane-spanning segment. The Lumenal portion of the chain corresponds to 40–192 (TASSSPIVVV…MGLMVILQRE (153 aa)). Residues Ser53, His92, and Asp134 each act as charge relay system in the active site. Residues 178–189 (VLLGIMGLMVIL) form a C-terminal short (CTS) helix region.

This sequence belongs to the peptidase S26B family. Component of the signal peptidase complex (SPC) composed of a catalytic subunit SEC11 and three accessory subunits SPC1, SPC2 and SPC3. The complex induces a local thinning of the ER membrane which is used to measure the length of the signal peptide (SP) h-region of protein substrates. This ensures the selectivity of the complex towards h-regions shorter than 18-20 amino acids. SPC associates with the translocon complex.

It localises to the endoplasmic reticulum membrane. The enzyme catalyses Cleavage of hydrophobic, N-terminal signal or leader sequences from secreted and periplasmic proteins.. In terms of biological role, catalytic component of the signal peptidase complex (SPC) which catalyzes the cleavage of N-terminal signal sequences from nascent proteins as they are translocated into the lumen of the endoplasmic reticulum. Specifically cleaves N-terminal signal peptides that contain a hydrophobic alpha-helix (h-region) shorter than 18-20 amino acids. In Emericella nidulans (strain FGSC A4 / ATCC 38163 / CBS 112.46 / NRRL 194 / M139) (Aspergillus nidulans), this protein is Signal peptidase complex catalytic subunit sec11 (sec11).